The following is a 484-amino-acid chain: MNNNITNSIAQLFFNTSFFAFLFLIIIAFNLCLFAYLYFQYRIYKKNPKKANNFKANEYEKIKLLKNQNFTESNKLIATTNELNELTSQLDNILVRIINKPLAKLVNDFLDEQIKQIVKLDKNSSDFHSESDNLPFYTKLFNDFHFGVDKLININIKNPLYNWVYSPSFLISESDFRKLNGISGINKKLLVEKLRIEDIVFTDLNKKYEVNVLTESPIKAQKTVLTVRNILMNDYVDNERIESYVQQANFFFTEHCKKIGKEILESLNIFISSSSLHRHFGFLAFRYSFGQNVLSHSLETAFLTAHLAALIELDSELSLKCGLLHDIGKSNDDNGKESHTITGAKLAEQFQLPDDIKYTIANHHNKHIDNTYCRLTQIADKLSAARIGARSDSSLLFKQLKDELKKIVDKTINNFHTTILLGQSGRRLMIWLETKNQNQLLSNEQIIEMVEKIKAEIAKNPITNHFPIKVVIRYNFEHSFNTKS.

The chain crosses the membrane as a helical span at residues 18 to 38; it reads FFAFLFLIIIAFNLCLFAYLY. The 69-residue stretch at 166–234 folds into the KH domain; sequence SPSFLISESD…LTVRNILMND (69 aa). Positions 293-385 constitute an HD domain; sequence VLSHSLETAF…TQIADKLSAA (93 aa).

It belongs to the RNase Y family.

The protein localises to the cell membrane. Endoribonuclease that initiates mRNA decay. The polypeptide is Ribonuclease Y (Mycoplasma genitalium (strain ATCC 33530 / DSM 19775 / NCTC 10195 / G37) (Mycoplasmoides genitalium)).